The following is a 420-amino-acid chain: 3-isopropylmalate dehydratase large subunit (420 aa).

Residues Cys-300, Cys-360, and Cys-363 each coordinate [4Fe-4S] cluster.

The protein belongs to the aconitase/IPM isomerase family. LeuC type 2 subfamily. As to quaternary structure, heterodimer of LeuC and LeuD. Requires [4Fe-4S] cluster as cofactor.

It carries out the reaction (2R,3S)-3-isopropylmalate = (2S)-2-isopropylmalate. Its pathway is amino-acid biosynthesis; L-leucine biosynthesis; L-leucine from 3-methyl-2-oxobutanoate: step 2/4. Functionally, catalyzes the isomerization between 2-isopropylmalate and 3-isopropylmalate, via the formation of 2-isopropylmaleate. The sequence is that of 3-isopropylmalate dehydratase large subunit from Halothermothrix orenii (strain H 168 / OCM 544 / DSM 9562).